We begin with the raw amino-acid sequence, 320 residues long: Aminoacyl tRNA synthase complex-interacting multifunctional protein 2 (320 aa).

Serine 36 bears the Phosphoserine mark. Positions 82–162 (TPDADLDVTN…HTHSAVRSVP (81 aa)) are interaction with PRKN. The interval 162 to 225 (PANLLQCFGE…FLFSLFGQKQ (64 aa)) is interaction with TP53. A GST C-terminal domain is found at 220–317 (LFGQKQDAVN…NLAPFHTALK (98 aa)).

In terms of assembly, part of the multisynthetase complex (MSC), a multisubunit complex that groups tRNA ligases for Arg (RARS1), Asp (DARS1), Gln (QARS1), Ile (IARS1), Leu (LARS1), Lys (KARS1), Met (MARS1) the bifunctional ligase for Glu and Pro (EPRS1) and the auxiliary subunits AIMP1/p43, AIMP2/p38 and EEF1E1/p18. Interacts (via N-terminus) with KARS1. Interacts with EPRS1. Forms a linear complex that contains MARS1, EEF1E1, EPRS1 and AIMP2 that is at the core of the multisubunit complex. Binds FUBP1 (via C-terminus). Interacts in both its unphosphorylated and phosphorylated forms with p53/TP53 (via N-terminus) in the nucleus following UV irradiation. Interacts (via N-terminus) with PRKN/parkin (via first RING-type domain). Interacts with TARS3. In terms of processing, phosphorylated on serine residues in response to UV irradiation. Post-translationally, ubiquitinated by PRKN, leading to its degradation by the proteasome.

The protein localises to the cytoplasm. Its subcellular location is the cytosol. The protein resides in the nucleus. In terms of biological role, required for assembly and stability of the aminoacyl-tRNA synthase complex. Mediates ubiquitination and degradation of FUBP1, a transcriptional activator of MYC, leading to MYC down-regulation which is required for aveolar type II cell differentiation. Blocks MDM2-mediated ubiquitination and degradation of p53/TP53. Functions as a proapoptotic factor. This is Aminoacyl tRNA synthase complex-interacting multifunctional protein 2 (AIMP2) from Bos taurus (Bovine).